Here is a 24-residue protein sequence, read N- to C-terminus: ANTVKVTLIKSTNGRLANHKAXVK.

It belongs to the universal ribosomal protein uL30 family. As to quaternary structure, part of the 50S ribosomal subunit.

The chain is Large ribosomal subunit protein uL30 (rpmD) from Ectopseudomonas mendocina (Pseudomonas mendocina).